The primary structure comprises 417 residues: Serine hydroxymethyltransferase (417 aa).

Lys54 carries the post-translational modification N6-acetyllysine. Residues Leu121 and 125-127 (GHL) contribute to the (6S)-5,6,7,8-tetrahydrofolate site. Lys229 is modified (N6-(pyridoxal phosphate)lysine). N6-acetyllysine occurs at positions 250, 285, and 354. 355–357 (SPF) lines the (6S)-5,6,7,8-tetrahydrofolate pocket. Lys375 carries the N6-acetyllysine modification.

Belongs to the SHMT family. Homodimer. It depends on pyridoxal 5'-phosphate as a cofactor.

The protein localises to the cytoplasm. It catalyses the reaction (6R)-5,10-methylene-5,6,7,8-tetrahydrofolate + glycine + H2O = (6S)-5,6,7,8-tetrahydrofolate + L-serine. It functions in the pathway one-carbon metabolism; tetrahydrofolate interconversion. The protein operates within amino-acid biosynthesis; glycine biosynthesis; glycine from L-serine: step 1/1. Catalyzes the reversible interconversion of serine and glycine with tetrahydrofolate (THF) serving as the one-carbon carrier. This reaction serves as the major source of one-carbon groups required for the biosynthesis of purines, thymidylate, methionine, and other important biomolecules. Also exhibits THF-independent aldolase activity toward beta-hydroxyamino acids, producing glycine and aldehydes, via a retro-aldol mechanism. This Escherichia coli O17:K52:H18 (strain UMN026 / ExPEC) protein is Serine hydroxymethyltransferase.